Here is a 340-residue protein sequence, read N- to C-terminus: MRVYYDRDCDINLIKDKKVAILGYGSQGHAHALNLRDSGAKNVVVALREGSPSAKKAEAEGLKVMGIAEAAAWCDLIMFTMPDELQAETYKKYVHDNLREGSAIAFAHGLNVHFGLIEPKPGVDVIMMAPKGPGHTVRGEYVKGGGVPCLVAVHNDATGKAMEIGLSYCSAIGGGRSGIIETNFRQECETDLFGEQAVLCGGLVELIRMGFETLVEAGYEPEMAYFECLHEVKLIVDLIYEGGIANMNYSISNTAEYGEYVSGPRILPYEETKARMKAVLTDIQTGKFVRDFMQENAVGQPFFKATRRINDEHQIEQVGEKLRGMMPWISKGKMVDRARN.

Residues 1–182 (MRVYYDRDCD…GGGRSGIIET (182 aa)) form the KARI N-terminal Rossmann domain. NADP(+) contacts are provided by residues 24–27 (YGSQ), Arg48, Ser51, Ser53, and 83–86 (DELQ). His108 is an active-site residue. Gly134 contacts NADP(+). One can recognise a KARI C-terminal knotted domain in the interval 183 to 329 (NFRQECETDL…EKLRGMMPWI (147 aa)). Positions 191, 195, 227, and 231 each coordinate Mg(2+). Ser252 lines the substrate pocket.

Belongs to the ketol-acid reductoisomerase family. It depends on Mg(2+) as a cofactor.

The catalysed reaction is (2R)-2,3-dihydroxy-3-methylbutanoate + NADP(+) = (2S)-2-acetolactate + NADPH + H(+). It carries out the reaction (2R,3R)-2,3-dihydroxy-3-methylpentanoate + NADP(+) = (S)-2-ethyl-2-hydroxy-3-oxobutanoate + NADPH + H(+). Its pathway is amino-acid biosynthesis; L-isoleucine biosynthesis; L-isoleucine from 2-oxobutanoate: step 2/4. It participates in amino-acid biosynthesis; L-valine biosynthesis; L-valine from pyruvate: step 2/4. Functionally, involved in the biosynthesis of branched-chain amino acids (BCAA). Catalyzes an alkyl-migration followed by a ketol-acid reduction of (S)-2-acetolactate (S2AL) to yield (R)-2,3-dihydroxy-isovalerate. In the isomerase reaction, S2AL is rearranged via a Mg-dependent methyl migration to produce 3-hydroxy-3-methyl-2-ketobutyrate (HMKB). In the reductase reaction, this 2-ketoacid undergoes a metal-dependent reduction by NADPH to yield (R)-2,3-dihydroxy-isovalerate. The polypeptide is Ketol-acid reductoisomerase (NADP(+)) (Cereibacter sphaeroides (strain ATCC 17029 / ATH 2.4.9) (Rhodobacter sphaeroides)).